The primary structure comprises 438 residues: GTPase Obg (438 aa).

Residues serine 2–leucine 160 form the Obg domain. The segment at asparagine 128–proline 147 is disordered. One can recognise an OBG-type G domain in the interval alanine 161–glutamate 339. Residues glycine 167–serine 174, phenylalanine 192–valine 196, aspartate 214–glycine 217, asparagine 284–aspartate 287, and serine 320–valine 322 each bind GTP. 2 residues coordinate Mg(2+): serine 174 and threonine 194. The region spanning glycine 360 to glutamate 438 is the OCT domain.

The protein belongs to the TRAFAC class OBG-HflX-like GTPase superfamily. OBG GTPase family. Monomer. Mg(2+) serves as cofactor.

The protein localises to the cytoplasm. An essential GTPase which binds GTP, GDP and possibly (p)ppGpp with moderate affinity, with high nucleotide exchange rates and a fairly low GTP hydrolysis rate. Plays a role in control of the cell cycle, stress response, ribosome biogenesis and in those bacteria that undergo differentiation, in morphogenesis control. The chain is GTPase Obg from Enterococcus faecalis (strain ATCC 700802 / V583).